A 277-amino-acid polypeptide reads, in one-letter code: Putative thiosulfate sulfurtransferase (277 aa).

Rhodanese domains are found at residues 18-125 (HAPK…PLSS) and 154-274 (AINV…APIE). Residue Cys233 is the Cysteine persulfide intermediate of the active site. Arg238 is a binding site for substrate.

It carries out the reaction thiosulfate + hydrogen cyanide = thiocyanate + sulfite + 2 H(+). Functionally, may be a sulfotransferase involved in the formation of thiosulfate. The sequence is that of Putative thiosulfate sulfurtransferase (cysA1) from Mycobacterium tuberculosis (strain CDC 1551 / Oshkosh).